Reading from the N-terminus, the 117-residue chain is Small ribosomal subunit protein bS16 (117 aa).

Over residues 81–90 (LKKRPNRNNP) the composition is skewed to basic residues. A disordered region spans residues 81-117 (LKKRPNRNNPHKGQPGKKAQERISAAKQVAEAESAPV).

Belongs to the bacterial ribosomal protein bS16 family.

This is Small ribosomal subunit protein bS16 from Bartonella quintana (strain Toulouse) (Rochalimaea quintana).